Here is a 308-residue protein sequence, read N- to C-terminus: 1D-myo-inositol 2-acetamido-2-deoxy-alpha-D-glucopyranoside deacetylase (308 aa).

Residues H18, D21, and H153 each contribute to the Zn(2+) site.

The protein belongs to the MshB deacetylase family. Zn(2+) is required as a cofactor.

The catalysed reaction is 1D-myo-inositol 2-acetamido-2-deoxy-alpha-D-glucopyranoside + H2O = 1D-myo-inositol 2-amino-2-deoxy-alpha-D-glucopyranoside + acetate. Its function is as follows. Catalyzes the deacetylation of 1D-myo-inositol 2-acetamido-2-deoxy-alpha-D-glucopyranoside (GlcNAc-Ins) in the mycothiol biosynthesis pathway. The chain is 1D-myo-inositol 2-acetamido-2-deoxy-alpha-D-glucopyranoside deacetylase from Salinispora arenicola (strain CNS-205).